A 495-amino-acid polypeptide reads, in one-letter code: Lysine--tRNA ligase (495 aa).

Mg(2+) contacts are provided by glutamate 406 and glutamate 413.

This sequence belongs to the class-II aminoacyl-tRNA synthetase family. As to quaternary structure, homodimer. Mg(2+) is required as a cofactor.

The protein localises to the cytoplasm. The catalysed reaction is tRNA(Lys) + L-lysine + ATP = L-lysyl-tRNA(Lys) + AMP + diphosphate. In Leptospira interrogans serogroup Icterohaemorrhagiae serovar copenhageni (strain Fiocruz L1-130), this protein is Lysine--tRNA ligase.